The following is a 134-amino-acid chain: Transcription antitermination protein NusB (134 aa).

It belongs to the NusB family.

Involved in transcription antitermination. Required for transcription of ribosomal RNA (rRNA) genes. Binds specifically to the boxA antiterminator sequence of the ribosomal RNA (rrn) operons. This Halalkalibacterium halodurans (strain ATCC BAA-125 / DSM 18197 / FERM 7344 / JCM 9153 / C-125) (Bacillus halodurans) protein is Transcription antitermination protein NusB.